The primary structure comprises 190 residues: DNA-invertase (190 aa).

The 134-residue stretch at 2-135 folds into the Resolvase/invertase-type recombinase catalytic domain; it reads ATIGYIRVST…AGLAAARAQG (134 aa). Catalysis depends on S10, which acts as the O-(5'-phospho-DNA)-serine intermediate. The H-T-H motif DNA-binding region spans 162-181; the sequence is RQQLAIIFGIGVSTLYRYFP.

It belongs to the site-specific recombinase resolvase family.

In terms of biological role, a DNA fragment of approximately 900 base pairs, adjacent to the fljB (H2) gene, which specifies the synthesis of phase-2 flagellin, can exist in either orientation with respect to fljB. The orientation of the inversion region controls expression of fljB. The hin gene occupies about two-thirds of the inversion region; it is required for the inversion of the fljB controlling region. This chain is DNA-invertase (hin), found in Salmonella abortus-equi.